Consider the following 168-residue polypeptide: Large ribosomal subunit protein uL10 (168 aa).

Belongs to the universal ribosomal protein uL10 family. As to quaternary structure, part of the ribosomal stalk of the 50S ribosomal subunit. The N-terminus interacts with L11 and the large rRNA to form the base of the stalk. The C-terminus forms an elongated spine to which L12 dimers bind in a sequential fashion forming a multimeric L10(L12)X complex.

In terms of biological role, forms part of the ribosomal stalk, playing a central role in the interaction of the ribosome with GTP-bound translation factors. This is Large ribosomal subunit protein uL10 from Clostridium acetobutylicum (strain ATCC 824 / DSM 792 / JCM 1419 / IAM 19013 / LMG 5710 / NBRC 13948 / NRRL B-527 / VKM B-1787 / 2291 / W).